Reading from the N-terminus, the 127-residue chain is Cystatin cpi-1 (127 aa).

Residues methionine 1–alanine 19 form the signal peptide. A Secondary area of contact motif is present at residues glutamine 68–glycine 72. The cysteines at positions 86 and 98 are disulfide-linked.

This sequence belongs to the cystatin family.

In terms of biological role, cysteine protease inhibitor which inhibits members of the peptidase C1 family. Does not inhibit asparaginyl endopeptidase. This is Cystatin cpi-1 from Brugia malayi (Filarial nematode worm).